The chain runs to 506 residues: Maturase K (506 aa).

This sequence belongs to the intron maturase 2 family. MatK subfamily.

It is found in the plastid. The protein resides in the chloroplast. Usually encoded in the trnK tRNA gene intron. Probably assists in splicing its own and other chloroplast group II introns. This Trifolium striatum (Knotted clover) protein is Maturase K.